A 526-amino-acid polypeptide reads, in one-letter code: UDP-glycosyltransferase UGT5 (526 aa).

Over 1–474 (MIFFYFLTLT…TAAVDMPWYQ (474 aa)) the chain is Lumenal. Asn49, Asn124, and Asn283 each carry an N-linked (GlcNAc...) asparagine glycan. Residues 475 to 495 (YLLLDVIAFLIFILVSVILII) traverse the membrane as a helical segment. The Cytoplasmic segment spans residues 496 to 526 (YYGVKISLRYLCALIFGNSSSLKPTKKVKDN).

The protein belongs to the UDP-glycosyltransferase family.

The protein localises to the microsome membrane. Catalyzes the transfer of a glycosyl group from a UDP-sugar to an acceptor molecule. The sequence is that of UDP-glycosyltransferase UGT5 from Dactylopius coccus (Cochineal).